A 342-amino-acid polypeptide reads, in one-letter code: Ion-translocating oxidoreductase complex subunit D (342 aa).

Transmembrane regions (helical) follow at residues G42 to L62, N68 to P90, and A124 to A144. The residue at position 171 (T171) is an FMN phosphoryl threonine. Transmembrane regions (helical) follow at residues F200–I220, W227–I247, F252–A272, L286–P306, and A308–Q328.

Belongs to the NqrB/RnfD family. As to quaternary structure, the complex is composed of six subunits: RnfA, RnfB, RnfC, RnfD, RnfE and RnfG. It depends on FMN as a cofactor.

The protein resides in the cell inner membrane. Its function is as follows. Part of a membrane-bound complex that couples electron transfer with translocation of ions across the membrane. The polypeptide is Ion-translocating oxidoreductase complex subunit D (Alcanivorax borkumensis (strain ATCC 700651 / DSM 11573 / NCIMB 13689 / SK2)).